Reading from the N-terminus, the 1401-residue chain is DNA-directed RNA polymerase subunit beta (1401 aa).

Belongs to the RNA polymerase beta chain family. As to quaternary structure, the RNAP catalytic core consists of 2 alpha, 1 beta, 1 beta' and 1 omega subunit. When a sigma factor is associated with the core the holoenzyme is formed, which can initiate transcription.

The enzyme catalyses RNA(n) + a ribonucleoside 5'-triphosphate = RNA(n+1) + diphosphate. DNA-dependent RNA polymerase catalyzes the transcription of DNA into RNA using the four ribonucleoside triphosphates as substrates. This is DNA-directed RNA polymerase subunit beta from Zymomonas mobilis subsp. mobilis (strain ATCC 31821 / ZM4 / CP4).